The sequence spans 576 residues: Arginine--tRNA ligase (576 aa).

A 'HIGH' region motif is present at residues 122 to 132; sequence PNVAKQMHVGH.

This sequence belongs to the class-I aminoacyl-tRNA synthetase family. In terms of assembly, monomer.

It localises to the cytoplasm. It carries out the reaction tRNA(Arg) + L-arginine + ATP = L-arginyl-tRNA(Arg) + AMP + diphosphate. This Yersinia enterocolitica serotype O:8 / biotype 1B (strain NCTC 13174 / 8081) protein is Arginine--tRNA ligase.